Consider the following 1035-residue polypeptide: NHS-like protein 3 (1035 aa).

Val-2 carries the N-myristoyl glycine lipid modification. Disordered stretches follow at residues 23–44 (KAEN…AVDE), 76–105 (QEKQ…DEDN), and 133–162 (IQRK…RRST). The span at 76-90 (QEKQKLNKGGWDHGD) shows a compositional bias: basic and acidic residues. A phosphoserine mark is found at Ser-93, Ser-138, Ser-145, and Ser-161. Thr-162 carries the phosphothreonine modification. Ser-215 is modified (phosphoserine). Asymmetric dimethylarginine is present on Arg-320. Ser-322, Ser-327, Ser-330, Ser-338, Ser-339, Ser-341, and Ser-342 each carry phosphoserine. 2 disordered regions span residues 332 to 869 (RSLG…APSS) and 885 to 1035 (SEGL…KELA). Residues 338–365 (SSVSSPQPRSRHPSSSSDTWSHSQSSDT) are compositionally biased toward low complexity. Residues 366–388 (IVSDGSTLSSKGGSEGQPESSTA) are compositionally biased toward polar residues. A phosphoserine mark is found at Ser-400, Ser-404, and Ser-409. The span at 411–429 (AEASDTLSIRSSGQLSGRS) shows a compositional bias: polar residues. A compositionally biased stretch (basic residues) spans 431–449 (SLRKLKRPPPPPRRTHSLH). The span at 517–532 (RTLSPSSGYSSQSGTP) shows a compositional bias: low complexity. A Phosphothreonine modification is found at Thr-531. The segment covering 543 to 552 (PASPGKAQPP) has biased composition (pro residues). A Phosphoserine modification is found at Ser-545. Residues 562 to 589 (SPGASVSSSLTSLCSSSSDPAPSDRSGP) are compositionally biased toward low complexity. Thr-593 carries the post-translational modification Phosphothreonine. Pro residues predominate over residues 602-624 (PPHPKVPAPFSPPPSKPRSPNPA). Ser-612 is subject to Phosphoserine. 2 stretches are compositionally biased toward low complexity: residues 625–645 (APAL…DASP) and 652–662 (QTTLTPLQESP). Phosphoserine occurs at positions 669 and 673. 2 stretches are compositionally biased toward pro residues: residues 669–685 (SPPP…PPPT) and 709–718 (NWPPPPPPAP). Over residues 737–765 (SVASPEPAGPSGSPELVSSPAASSSSATA) the composition is skewed to low complexity. A compositionally biased stretch (pro residues) spans 771 to 784 (PGSPDPPPAPPAPA). Positions 838-848 (GAPTPALGPSA) are enriched in low complexity. Residues Ser-858, Ser-862, and Ser-868 each carry the phosphoserine modification. Positions 894–906 (NGPPEAEPRPPQS) are enriched in pro residues. Phosphoserine is present on residues Ser-929, Ser-959, Ser-971, and Ser-979. A compositionally biased stretch (pro residues) spans 961-980 (KAPPPVARKPSVGVPPPASP). Basic and acidic residues predominate over residues 999–1008 (TQDRTKRELA).

As to expression, expressed in lung.

Its function is as follows. Able to directly activate the TNF-NFkappaB signaling pathway. The protein is NHS-like protein 3 of Homo sapiens (Human).